Here is a 79-residue protein sequence, read N- to C-terminus: Exodeoxyribonuclease 7 small subunit (79 aa).

Belongs to the XseB family. In terms of assembly, heterooligomer composed of large and small subunits.

The protein localises to the cytoplasm. It catalyses the reaction Exonucleolytic cleavage in either 5'- to 3'- or 3'- to 5'-direction to yield nucleoside 5'-phosphates.. In terms of biological role, bidirectionally degrades single-stranded DNA into large acid-insoluble oligonucleotides, which are then degraded further into small acid-soluble oligonucleotides. This chain is Exodeoxyribonuclease 7 small subunit, found in Haemophilus influenzae (strain PittGG).